Here is a 132-residue protein sequence, read N- to C-terminus: Small ribosomal subunit protein uS8 (132 aa).

This sequence belongs to the universal ribosomal protein uS8 family. Part of the 30S ribosomal subunit. Contacts proteins S5 and S12.

Functionally, one of the primary rRNA binding proteins, it binds directly to 16S rRNA central domain where it helps coordinate assembly of the platform of the 30S subunit. The protein is Small ribosomal subunit protein uS8 of Lacticaseibacillus casei (strain BL23) (Lactobacillus casei).